A 732-amino-acid chain; its full sequence is Engulfment and cell motility protein 2 (732 aa).

Y48 carries the phosphotyrosine modification. The ELMO domain occupies 323–497 (AQRDIIFELR…VVREQITRAL (175 aa)). Residue S515 is modified to Phosphoserine. Positions 565 to 686 (SSFRKIGNRR…LLGKDMSSEL (122 aa)) constitute a PH domain. The short motif at 712-719 (PEAPPPVP) is the SH3-binding element. Y729 is modified (phosphotyrosine).

Interacts directly with the SH3-domain of DOCK1 via its SH3-binding site. Probably forms a heterotrimeric complex with DOCK1 and RAC1. Interacts with ARHGEF16, DOCK4 and EPHA2; mediates activation of RAC1 by EPHA2. Interacts with ADGRB3. Interacts with AUTS2; the interaction is direct.

Its subcellular location is the cytoplasm. The protein resides in the cytosol. It localises to the membrane. In terms of biological role, involved in cytoskeletal rearrangements required for phagocytosis of apoptotic cells and cell motility. Acts in association with DOCK1 and CRK. Was initially proposed to be required in complex with DOCK1 to activate Rac Rho small GTPases. May enhance the guanine nucleotide exchange factor (GEF) activity of DOCK1. The chain is Engulfment and cell motility protein 2 (Elmo2) from Mus musculus (Mouse).